Here is a 1483-residue protein sequence, read N- to C-terminus: Cystic fibrosis transmembrane conductance regulator (1483 aa).

Residues 1-77 (MQRSPLEKAS…KLINALRRCF (77 aa)) are Cytoplasmic-facing. Residues 78–98 (FWKFMFYGILLYLGEVTKAVQ) traverse the membrane as a helical segment. Positions 81-365 (FMFYGILLYL…WAVQTWYDSL (285 aa)) constitute an ABC transmembrane type-1 1 domain. Over 99–122 (PLLLGRIIASYDPDNKVERSIAIY) the chain is Extracellular. A helical transmembrane segment spans residues 123–146 (LGIGLCLLFVVRTLLLHPAIFGLH). Topologically, residues 147–195 (HIGMQMRIAMFSLIYKKTLKLSSRVLDKISIGQLISLLSNNLNKFDEGL) are cytoplasmic. Residues 196–216 (ALAHFVWIVPLQVTLLMGLLW) form a helical membrane-spanning segment. The Extracellular portion of the chain corresponds to 217–222 (ELLQAS). A helical membrane pass occupies residues 223–243 (AFCGLAFLIIVAFYQAGLGRM). The Cytoplasmic segment spans residues 244–298 (MMKYRDKRGGKINERLVITSEMIENIQSVKAYCWEEAMEKMIENLRQTELKLTRK). A helical transmembrane segment spans residues 299–319 (AAYVRYCNSSAFFFSGFFVVF). The Extracellular portion of the chain corresponds to 320 to 339 (LSVLPYALMKGIILRKIFTT). Residues 340–358 (ISFCIVLRMAVTRQFPWAV) traverse the membrane as a helical segment. The Cytoplasmic segment spans residues 359–859 (QTWYDSLGAI…YLRYITIHKS (501 aa)). Residues Trp401, Ser434, 458 to 465 (GSTGAGKT), and Gln493 each bind ATP. Residues 423–646 (NGDNSLFFSN…RPDFSSKLMG (224 aa)) enclose the ABC transporter 1 domain. Cys524 carries S-palmitoyl cysteine lipidation. Phosphoserine occurs at positions 549 and 660. Residues 654-832 (SAERRNSILT…EEINEEDLKE (179 aa)) form a disordered R region region. Position 670 is a phosphoserine; by PKA (Ser670). Ser686 is modified (phosphoserine). Residue Lys688 forms a Glycyl lysine isopeptide (Lys-Gly) (interchain with G-Cter in ubiquitin) linkage. A phosphoserine mark is found at Ser700 and Ser712. Phosphothreonine is present on Thr717. A phosphoserine mark is found at Ser737, Ser768, Ser791, Ser796, and Ser814. Residues 860 to 880 (LIFVLIWCLIIFLAEVAVSLV) traverse the membrane as a helical segment. One can recognise an ABC transmembrane type-1 2 domain in the interval 860–1157 (LIFVLIWCLI…AVNSSIDVDS (298 aa)). The Extracellular portion of the chain corresponds to 881 to 920 (FLLLFEKSPRQDTGNVTKSSNNSSYGVIITNTSSYYIIYI). Asn895, Asn901, Asn902, and Asn911 each carry an N-linked (GlcNAc...) asparagine glycan. A discontinuously helical transmembrane segment spans residues 921–941 (YVGVADTLLALGLLRGLPLVH). The Cytoplasmic segment spans residues 942–992 (TLITASKILHHKMLHSVLQAPMSTLNTLKAGGILNRFSKDIAILDDLLPLT). Residues 993 to 1013 (IFDFIQLILIVIGAVIVVSVL) traverse the membrane as a helical segment. Over 1014-1015 (EP) the chain is Extracellular. Residues 1016-1036 (YIFLATVPVIIAFVMLRAYFL) traverse the membrane as a helical segment. Over 1037–1097 (HTSQQLKQLE…TANWFLYLST (61 aa)) the chain is Cytoplasmic. A helical transmembrane segment spans residues 1098–1118 (LRWFQMRIEMIFVIFFIAVTF). Topologically, residues 1119 to 1132 (ISILTTGDGEGRVG) are extracellular. A helical membrane pass occupies residues 1133 to 1153 (IILTLAMNIMNTLQWAVNSSI). At 1154-1483 (DVDSLMRSVS…TEEEVQETRL (330 aa)) the chain is on the cytoplasmic side. In terms of domain architecture, ABC transporter 2 spans 1213-1446 (MTVKDLTAKY…KSLFRQAISN (234 aa)). Residues Tyr1222 and 1247–1254 (GRTGSGKS) each bind ATP. Residues 1389–1483 (RTIKQAFADC…TEEEVQETRL (95 aa)) form an interaction with GORASP2 region. Cys1398 carries S-palmitoyl cysteine lipidation. 2 positions are modified to phosphoserine: Ser1447 and Ser1459. The span at 1455–1465 (HRNSSKHKSRS) shows a compositional bias: basic residues. Positions 1455–1483 (HRNSSKHKSRSKIAALKEETEEEVQETRL) are disordered. A compositionally biased stretch (acidic residues) spans 1473–1483 (ETEEEVQETRL). The short motif at 1481–1483 (TRL) is the PDZ-binding element.

It belongs to the ABC transporter superfamily. ABCC family. CFTR transporter (TC 3.A.1.202) subfamily. As to quaternary structure, monomer; does not require oligomerization for channel activity. May form oligomers in the membrane. Interacts with SLC26A3, SLC26A6 and NHERF1. Interacts with SHANK2. Interacts with MYO6. Interacts (via C-terminus) with GOPC (via PDZ domain); this promotes CFTR internalization and thereby decreases channel activity. Interacts with SLC4A7 through NHERF1. Found in a complex with MYO5B and RAB11A. Interacts with ANO1. Interacts with SLC26A8. Interacts with AHCYL1; the interaction increases CFTR activity. Interacts with CSE1L. The core-glycosylated form interacts with GORASP2 (via PDZ GRASP-type 1 domain) in respone to ER stress. Interacts with MARCHF2; the interaction leads to CFTR ubiqtuitination and degradation. Interacts with ADGRG2. In terms of processing, N-glycosylated. Post-translationally, phosphorylated; cAMP treatment promotes phosphorylation and activates the channel. Dephosphorylation decreases the ATPase activity (in vitro). Phosphorylation at PKA sites activates the channel. Phosphorylation at PKC sites enhances the response to phosphorylation by PKA. Phosphorylated by AMPK; this inhibits channel activity. Ubiquitinated, leading to its degradation in the lysosome. Deubiquitination by USP10 in early endosomes enhances its endocytic recycling to the cell membrane. Ubiquitinated by RNF185 during ER stress. Ubiquitinated by MARCHF2.

It is found in the apical cell membrane. It localises to the early endosome membrane. Its subcellular location is the cell membrane. The protein resides in the recycling endosome membrane. The protein localises to the endoplasmic reticulum membrane. It is found in the nucleus. The catalysed reaction is ATP + H2O + closed Cl(-) channel = ADP + phosphate + open Cl(-) channel.. The enzyme catalyses chloride(in) = chloride(out). It carries out the reaction hydrogencarbonate(in) = hydrogencarbonate(out). It catalyses the reaction ATP + H2O = ADP + phosphate + H(+). Epithelial ion channel that plays an important role in the regulation of epithelial ion and water transport and fluid homeostasis. Mediates the transport of chloride ions across the cell membrane. The ion channel is also permeable to HCO(3)(-); selectivity depends on the extracellular chloride concentration. Exerts its function also by modulating the activity of other ion channels and transporters. Contributes to the regulation of the pH and the ion content of the epithelial fluid layer. Modulates the activity of the epithelial sodium channel (ENaC) complex, in part by regulating the cell surface expression of the ENaC complex. May regulate bicarbonate secretion and salvage in epithelial cells by regulating the transporter SLC4A7. Can inhibit the chloride channel activity of ANO1. Plays a role in the chloride and bicarbonate homeostasis during sperm epididymal maturation and capacitation. This chain is Cystic fibrosis transmembrane conductance regulator, found in Atelerix albiventris (Middle-African hedgehog).